The chain runs to 1088 residues: RNA-directed RNA polymerase (1088 aa).

The 187-residue stretch at 501–687 (LSYGDVTRFL…AKRYLAGGKI (187 aa)) folds into the RdRp catalytic domain.

It belongs to the reoviridae RNA-directed RNA polymerase family. Interacts with VP3 (Potential). Interacts with VP2; this interaction activates VP1. Interacts with NSP5; this interaction is probably necessary for the formation of functional virus factories. Interacts with NSP2; this interaction is weak. Mg(2+) is required as a cofactor.

The protein resides in the virion. The enzyme catalyses RNA(n) + a ribonucleoside 5'-triphosphate = RNA(n+1) + diphosphate. RNA-directed RNA polymerase that is involved in both transcription and genome replication. Together with VP3 capping enzyme, forms an enzyme complex positioned near the channels situated at each of the five-fold vertices of the core. Following infection, the outermost layer of the virus is lost, leaving a double-layered particle (DLP) made up of the core and VP6 shell. VP1 then catalyzes the transcription of fully conservative plus-strand genomic RNAs that are extruded through the DLP's channels into the cytoplasm where they function as mRNAs for translation of viral proteins. One copy of each of the viral (+)RNAs is also recruited during core assembly, together with newly synthesized polymerase complexes and VP2. The polymerase of these novo-formed particles catalyzes the synthesis of complementary minus-strands leading to dsRNA formation. To do so, the polymerase specifically recognizes and binds 4 bases 5'-UGUG-3' in the conserved 3'-sequence of plus-strand RNA templates. VP2 presumably activates the autoinhibited VP1-RNA complex to coordinate packaging and genome replication. Once dsRNA synthesis is complete, the polymerase switches to the transcriptional mode, thus providing secondary transcription. This is RNA-directed RNA polymerase from Rotavirus A (strain RVA/Human/Japan/KU/1995/G1P1A[8]) (RV-A).